We begin with the raw amino-acid sequence, 203 residues long: uncharacterized protein (203 aa).

This is an uncharacterized protein from Haemophilus influenzae (strain ATCC 51907 / DSM 11121 / KW20 / Rd).